Here is a 379-residue protein sequence, read N- to C-terminus: Cytochrome b (379 aa).

The next 4 helical transmembrane spans lie at 33–53, 77–98, 113–133, and 178–198; these read FGSL…FLAM, WMIR…FMHV, WNIG…GYVL, and FFAF…VHLL. Heme b is bound by residues histidine 83 and histidine 97. Heme b contacts are provided by histidine 182 and histidine 196. Histidine 201 is a binding site for a ubiquinone. A run of 4 helical transmembrane segments spans residues 226–246, 288–308, 320–340, and 347–367; these read IKDI…VLFS, LGGV…PMLH, LSQC…WIGG, and FITI…XLMP.

Belongs to the cytochrome b family. As to quaternary structure, the cytochrome bc1 complex contains 11 subunits: 3 respiratory subunits (MT-CYB, CYC1 and UQCRFS1), 2 core proteins (UQCRC1 and UQCRC2) and 6 low-molecular weight proteins (UQCRH/QCR6, UQCRB/QCR7, UQCRQ/QCR8, UQCR10/QCR9, UQCR11/QCR10 and a cleavage product of UQCRFS1). This cytochrome bc1 complex then forms a dimer. Heme b is required as a cofactor.

The protein resides in the mitochondrion inner membrane. In terms of biological role, component of the ubiquinol-cytochrome c reductase complex (complex III or cytochrome b-c1 complex) that is part of the mitochondrial respiratory chain. The b-c1 complex mediates electron transfer from ubiquinol to cytochrome c. Contributes to the generation of a proton gradient across the mitochondrial membrane that is then used for ATP synthesis. The sequence is that of Cytochrome b (MT-CYB) from Chrotogale owstoni (Owston's palm civet).